Here is a 508-residue protein sequence, read N- to C-terminus: Photosystem II CP47 reaction center protein (508 aa).

Helical transmembrane passes span 21 to 36 (AVHI…WAGS), 101 to 115 (IILS…IWHW), 140 to 156 (GIHL…FGAF), 203 to 218 (IAAG…FHLS), 237 to 252 (VLSS…AFIV), and 457 to 472 (CFAL…HGAR).

It belongs to the PsbB/PsbC family. PsbB subfamily. PSII is composed of 1 copy each of membrane proteins PsbA, PsbB, PsbC, PsbD, PsbE, PsbF, PsbH, PsbI, PsbJ, PsbK, PsbL, PsbM, PsbT, PsbX, PsbY, PsbZ, Psb30/Ycf12, at least 3 peripheral proteins of the oxygen-evolving complex and a large number of cofactors. It forms dimeric complexes. The cofactor is Binds multiple chlorophylls. PSII binds additional chlorophylls, carotenoids and specific lipids..

Its subcellular location is the plastid. The protein resides in the chloroplast thylakoid membrane. One of the components of the core complex of photosystem II (PSII). It binds chlorophyll and helps catalyze the primary light-induced photochemical processes of PSII. PSII is a light-driven water:plastoquinone oxidoreductase, using light energy to abstract electrons from H(2)O, generating O(2) and a proton gradient subsequently used for ATP formation. This chain is Photosystem II CP47 reaction center protein, found in Chara vulgaris (Common stonewort).